Here is a 278-residue protein sequence, read N- to C-terminus: Pyrroline-5-carboxylate reductase (278 aa).

This sequence belongs to the pyrroline-5-carboxylate reductase family.

The protein resides in the cytoplasm. The catalysed reaction is L-proline + NADP(+) = (S)-1-pyrroline-5-carboxylate + NADPH + 2 H(+). The enzyme catalyses L-proline + NAD(+) = (S)-1-pyrroline-5-carboxylate + NADH + 2 H(+). Its pathway is amino-acid biosynthesis; L-proline biosynthesis; L-proline from L-glutamate 5-semialdehyde: step 1/1. The chain is Pyrroline-5-carboxylate reductase from Actinidia chinensis var. chinensis (Chinese soft-hair kiwi).